Reading from the N-terminus, the 332-residue chain is L-lactate dehydrogenase A chain (332 aa).

NAD(+) is bound by residues G29–K57 and R99. Substrate contacts are provided by R106, N138, and R169. N138 is a binding site for NAD(+). The active-site Proton acceptor is the H193. T248 lines the substrate pocket.

The protein belongs to the LDH/MDH superfamily. LDH family. In terms of assembly, homotetramer.

It is found in the cytoplasm. It carries out the reaction (S)-lactate + NAD(+) = pyruvate + NADH + H(+). The protein operates within fermentation; pyruvate fermentation to lactate; (S)-lactate from pyruvate: step 1/1. Its function is as follows. Interconverts simultaneously and stereospecifically pyruvate and lactate with concomitant interconversion of NADH and NAD(+). This is L-lactate dehydrogenase A chain (ldha) from Lycodichthys dearborni (Antarctic eelpout).